The chain runs to 438 residues: GTPase Der (438 aa).

2 EngA-type G domains span residues P4–S168 and I177–S352. Residues G10–S17, D57–I61, N120–D123, G183–S190, D230–L234, and N295–D298 each bind GTP. The region spanning K353 to K437 is the KH-like domain.

This sequence belongs to the TRAFAC class TrmE-Era-EngA-EngB-Septin-like GTPase superfamily. EngA (Der) GTPase family. Associates with the 50S ribosomal subunit.

Its function is as follows. GTPase that plays an essential role in the late steps of ribosome biogenesis. In Clostridium perfringens (strain ATCC 13124 / DSM 756 / JCM 1290 / NCIMB 6125 / NCTC 8237 / Type A), this protein is GTPase Der.